Consider the following 239-residue polypeptide: Glucosamine-6-phosphate deaminase (239 aa).

Residue Asp62 is the Proton acceptor; for enolization step of the active site. The active-site For ring-opening step is Asn128. His130 functions as the Proton acceptor; for ring-opening step in the catalytic mechanism. The active-site For ring-opening step is Glu135.

The protein belongs to the glucosamine/galactosamine-6-phosphate isomerase family. NagB subfamily.

The catalysed reaction is alpha-D-glucosamine 6-phosphate + H2O = beta-D-fructose 6-phosphate + NH4(+). It participates in amino-sugar metabolism; N-acetylneuraminate degradation; D-fructose 6-phosphate from N-acetylneuraminate: step 5/5. In terms of biological role, catalyzes the reversible isomerization-deamination of glucosamine 6-phosphate (GlcN6P) to form fructose 6-phosphate (Fru6P) and ammonium ion. This is Glucosamine-6-phosphate deaminase from Lactobacillus acidophilus (strain ATCC 700396 / NCK56 / N2 / NCFM).